The chain runs to 171 residues: MIGWLEALLRVGRKLAAKTVTVQYPEVKPQLPPRSRGRIVLTRDPDGQERCVACNLCAVACPVGCIDLSKAVAEDGRWYPEHFRINFARCIFCGYCEEACPTAAIQLTPDFELSEWRRDALVYDKKDLLIAGEGKVRGYRYWSVAGKAITGKDKGDAEHEAPPVDLKGLRP.

2 consecutive 4Fe-4S ferredoxin-type domains span residues 39–71 and 81–110; these read IVLTRDPDGQERCVACNLCAVACPVGCIDLSKA and EHFRINFARCIFCGYCEEACPTAAIQLTPD. 8 residues coordinate [4Fe-4S] cluster: cysteine 51, cysteine 54, cysteine 57, cysteine 61, cysteine 90, cysteine 93, cysteine 96, and cysteine 100.

The protein belongs to the complex I 23 kDa subunit family. As to quaternary structure, NDH-1 is composed of 14 different subunits. Subunits NuoA, H, J, K, L, M, N constitute the membrane sector of the complex. The cofactor is [4Fe-4S] cluster.

Its subcellular location is the cell inner membrane. It catalyses the reaction a quinone + NADH + 5 H(+)(in) = a quinol + NAD(+) + 4 H(+)(out). In terms of biological role, NDH-1 shuttles electrons from NADH, via FMN and iron-sulfur (Fe-S) centers, to quinones in the respiratory chain. The immediate electron acceptor for the enzyme in this species is believed to be ubiquinone. Couples the redox reaction to proton translocation (for every two electrons transferred, four hydrogen ions are translocated across the cytoplasmic membrane), and thus conserves the redox energy in a proton gradient. The protein is NADH-quinone oxidoreductase subunit I 2 of Rhodopseudomonas palustris (strain BisB18).